A 328-amino-acid chain; its full sequence is Malate dehydrogenase (328 aa).

12-18 (GAAGQIG) is an NAD(+) binding site. Arginine 95 and arginine 101 together coordinate substrate. Residues asparagine 108, glutamine 115, and 132–134 (VGN) contribute to the NAD(+) site. Residues asparagine 134 and arginine 165 each coordinate substrate. Histidine 190 serves as the catalytic Proton acceptor.

Belongs to the LDH/MDH superfamily. MDH type 2 family.

The enzyme catalyses (S)-malate + NAD(+) = oxaloacetate + NADH + H(+). Its function is as follows. Catalyzes the reversible oxidation of malate to oxaloacetate. In Acidovorax ebreus (strain TPSY) (Diaphorobacter sp. (strain TPSY)), this protein is Malate dehydrogenase.